We begin with the raw amino-acid sequence, 116 residues long: Large ribosomal subunit protein bL17 (116 aa).

This sequence belongs to the bacterial ribosomal protein bL17 family. As to quaternary structure, part of the 50S ribosomal subunit. Contacts protein L32.

The protein is Large ribosomal subunit protein bL17 of Prochlorococcus marinus (strain MIT 9211).